The following is an 800-amino-acid chain: Calmodulin-sensitive adenylate cyclase (800 aa).

Residues 1–33 (MTRNKFIPNKFSIISFSVLLFAISSSQAIEVNA) form the signal peptide. The 214-residue stretch at 60–273 (KDSINNLVKT…MFEYMNKLEK (214 aa)) folds into the ATLF-like domain. Positions 294–349 (DVLKGEKALKASGLVPEHADAFKKIARELNTYILFRPVNKLATNLIKSGVATKGLN) are catalytic CA1. The tract at residues 350–489 (VHGKSSDWGP…NVEGVLKPLT (140 aa)) is catalytic CB. The active-site Proton acceptor is the His351. The tract at residues 490–622 (ADYDLFALAP…RFIEKNITGK (133 aa)) is catalytic CA2. Mg(2+) contacts are provided by Asp491 and Asp493. Residues Thr548 and 577–579 (HGT) contribute to the 3',5'-cyclic AMP site. His577 contacts Mg(2+). The interval 623-800 (DYLYYFNRSY…EVFQKIIDEK (178 aa)) is interaction with calmodulin.

Belongs to the adenylyl cyclase class-2 family. As to quaternary structure, interacts (via ATLF domain) with the cleaved form of protective antigen (PA-63) anthrax toxin; interaction is required for EF translocation into the host cytoplasm. The cofactor is Ca(2+).

It is found in the secreted. Its subcellular location is the host cytoplasm. It localises to the host cytosol. It carries out the reaction ATP = 3',5'-cyclic AMP + diphosphate. Host calmodulin is an absolute requirement for its activation. Inhibited by ethyl 5-aminopyrazolo[1,5-a]quinazoline-3-carboxylate. In terms of biological role, edema factor (EF), which constitutes one of the three proteins composing the anthrax toxin, causes edema in the host. Acts as a calmodulin-dependent adenylyl cyclase by converting ATP to cAMP, leading to dramatic elevation of intracellular cAMP levels in the host, thereby causing edema. EF is not toxic by itself and only acts as an edema factor when associated with protective antigen (PA) to form the edema toxin (EdTx). Required for the survival of germinated spores within macrophages at the early stages of infection. This Bacillus anthracis protein is Calmodulin-sensitive adenylate cyclase (cya).